Consider the following 470-residue polypeptide: tRNA modification GTPase MnmE (470 aa).

(6S)-5-formyl-5,6,7,8-tetrahydrofolate is bound by residues Lys27, Glu90, and Arg129. Residues 231-391 form the TrmE-type G domain; that stretch reads GVSLVLAGKP…LRDFLNQRFL (161 aa). GTP contacts are provided by residues 241-246, 260-266, and 285-288; these read NVGKSS, TPFPGTT, and DTAG. Mg(2+) contacts are provided by Ser245 and Thr266. A (6S)-5-formyl-5,6,7,8-tetrahydrofolate-binding site is contributed by Lys470.

Belongs to the TRAFAC class TrmE-Era-EngA-EngB-Septin-like GTPase superfamily. TrmE GTPase family. Homodimer. Heterotetramer of two MnmE and two MnmG subunits. K(+) is required as a cofactor.

Its subcellular location is the cytoplasm. Functionally, exhibits a very high intrinsic GTPase hydrolysis rate. Involved in the addition of a carboxymethylaminomethyl (cmnm) group at the wobble position (U34) of certain tRNAs, forming tRNA-cmnm(5)s(2)U34. The polypeptide is tRNA modification GTPase MnmE (Syntrophobacter fumaroxidans (strain DSM 10017 / MPOB)).